Here is a 440-residue protein sequence, read N- to C-terminus: Dynein axonemal assembly factor 11 (440 aa).

LRR repeat units follow at residues 20 to 43 (IFSL…HKWC), 44 to 65 (RDLK…VGRL), 66 to 89 (KKLE…GCES), and 90 to 110 (LQKL…ETLK). The 19-residue stretch at 128-146 (YQGYRQYVVATVPQLQSLD) folds into the LRRCT domain. The segment covering 178–192 (EEREKQKSNANEHPE) has biased composition (basic and acidic residues). Disordered stretches follow at residues 178–267 (EERE…RTLI) and 363–440 (PKKR…PPLM). Residues 193–211 (INQSLSESQNGTQQYPESS) are compositionally biased toward polar residues. Residues 236–259 (SRLEAHRHLEEKRRANEKEKEKPK) are compositionally biased toward basic and acidic residues. A CS domain is found at 276–374 (VNEPKLDFSL…KRTIRPTSVT (99 aa)). A compositionally biased stretch (polar residues) spans 369-378 (RPTSVTSNQN). 2 stretches are compositionally biased toward basic and acidic residues: residues 379-392 (NKKD…RELL) and 420-431 (GLEERPVSKDFV).

It belongs to the tilB family. In terms of assembly, interacts with dvl2. Interacts with kur. As to expression, expressed in kinocilia of hair cells.

The protein resides in the cytoplasm. It localises to the dynein axonemal particle. It is found in the cell projection. Its subcellular location is the cilium. Plays a crucial role in regulating cilia motility in pronephric tubules, cloaca and neural tube. Required for establishing left-right asymmetry of the body plan; controls cell fate and convergent extension (CE) movements during gastrulation, respectively, via the Wnt and the planar cell polarity (PCP) signaling pathways. Required for the proper development of renal glomeruli and tubules. This Danio rerio (Zebrafish) protein is Dynein axonemal assembly factor 11 (dnaaf11).